The primary structure comprises 175 residues: NADH-ubiquinone oxidoreductase chain 6 (175 aa).

A run of 5 helical transmembrane segments spans residues 1–21 (MMTY…VGFS), 25–45 (SPIY…GIIM), 47–67 (FGGS…MLVV), 88–108 (TVMG…LYVL), and 149–169 (YGAW…LVIL).

It belongs to the complex I subunit 6 family. Core subunit of respiratory chain NADH dehydrogenase (Complex I) which is composed of 45 different subunits.

It is found in the mitochondrion inner membrane. It catalyses the reaction a ubiquinone + NADH + 5 H(+)(in) = a ubiquinol + NAD(+) + 4 H(+)(out). Core subunit of the mitochondrial membrane respiratory chain NADH dehydrogenase (Complex I) which catalyzes electron transfer from NADH through the respiratory chain, using ubiquinone as an electron acceptor. Essential for the catalytic activity and assembly of complex I. This chain is NADH-ubiquinone oxidoreductase chain 6 (MT-ND6), found in Equus caballus (Horse).